A 218-amino-acid chain; its full sequence is Imidazole glycerol phosphate synthase subunit HisH (218 aa).

One can recognise a Glutamine amidotransferase type-1 domain in the interval 7 to 211 (STVIIDTGCA…LALDKASLDA (205 aa)). Residue Cys82 is the Nucleophile of the active site. Residues His186 and Glu188 contribute to the active site.

In terms of assembly, heterodimer of HisH and HisF.

It localises to the cytoplasm. The enzyme catalyses 5-[(5-phospho-1-deoxy-D-ribulos-1-ylimino)methylamino]-1-(5-phospho-beta-D-ribosyl)imidazole-4-carboxamide + L-glutamine = D-erythro-1-(imidazol-4-yl)glycerol 3-phosphate + 5-amino-1-(5-phospho-beta-D-ribosyl)imidazole-4-carboxamide + L-glutamate + H(+). It carries out the reaction L-glutamine + H2O = L-glutamate + NH4(+). Its pathway is amino-acid biosynthesis; L-histidine biosynthesis; L-histidine from 5-phospho-alpha-D-ribose 1-diphosphate: step 5/9. Its function is as follows. IGPS catalyzes the conversion of PRFAR and glutamine to IGP, AICAR and glutamate. The HisH subunit catalyzes the hydrolysis of glutamine to glutamate and ammonia as part of the synthesis of IGP and AICAR. The resulting ammonia molecule is channeled to the active site of HisF. The sequence is that of Imidazole glycerol phosphate synthase subunit HisH from Shewanella sediminis (strain HAW-EB3).